The primary structure comprises 791 residues: Subtilisin-like protease SBT5.6 (791 aa).

A signal peptide spans 1-20 (MKKLTSLFPLLFLIPLLASC). The propeptide at 21–108 (AEEKQVYIVY…KSHPRKYEAH (88 aa)) is activation peptide. Residues 26–104 (VYIVYFGEHK…VSVFKSHPRK (79 aa)) enclose the Inhibitor I9 domain. Residues 134–645 (ADDRFRVGRN…SGHFRPTKAA (512 aa)) enclose the Peptidase S8 domain. Asp-160 acts as the Charge relay system in catalysis. Residues Asn-193 and Asn-219 are each glycosylated (N-linked (GlcNAc...) asparagine). Catalysis depends on His-235, which acts as the Charge relay system. Residues 400-494 (FAPLVYASNV…VTPTVVDKIL (95 aa)) form the PA domain. A glycan (N-linked (GlcNAc...) asparagine) is linked at Asn-417. The active-site Charge relay system is Ser-578. 3 N-linked (GlcNAc...) asparagine glycosylation sites follow: Asn-666, Asn-713, and Asn-761.

The protein belongs to the peptidase S8 family.

The protein localises to the secreted. The sequence is that of Subtilisin-like protease SBT5.6 from Arabidopsis thaliana (Mouse-ear cress).